Here is a 1490-residue protein sequence, read N- to C-terminus: Leucine-rich repeat-containing protein 7 (1490 aa).

LRR repeat units follow at residues 23–44 (IISV…VFNF), 47–68 (TLEE…LFNC), 70–91 (ALRK…IASL), 93–114 (NLKE…IKCC), 116–137 (CLTI…FTQL), 139–161 (NLTQ…GRLV), 162–183 (KLRI…MHKL), 185–206 (QLER…LDQI), 208–229 (NLRE…IGKL), 231–253 (MLVY…SGCE), 254–275 (ALED…IGLL), 277–298 (KLTT…IGNL), 300–321 (LLEE…IGYL), 323–344 (SLRT…IGSC), 346–367 (NVTV…IGQM), 369–391 (RLRV…TKLK), and 392–413 (ELAA…QTEA). Residues Ser439, Ser441, and Ser443 each carry the phosphoserine modification. A compositionally biased stretch (basic and acidic residues) spans 663–676 (KKESTDESEVDKTH). Disordered regions lie at residues 663-704 (KKES…NTRM), 785-807 (AGEN…AHGR), and 822-899 (ELEQ…YHDP). Residues 677-686 (CLNNSVSSGT) show a composition bias toward polar residues. Residues 687-700 (YSDYSPSQASSASS) show a composition bias toward low complexity. A Phosphothreonine modification is found at Thr831. At Ser850 the chain carries Phosphoserine. Residues 859–871 (PSKLETTPTTSPL) are compositionally biased toward low complexity. The residue at position 865 (Thr865) is a Phosphothreonine. Ser869 bears the Phosphoserine mark. Residues 872–882 (PERKDHMKEPT) show a composition bias toward basic and acidic residues. 3 positions are modified to phosphoserine: Ser947, Ser949, and Ser1118. Residues 1134–1144 (PHELPPGDRYG) show a composition bias toward basic and acidic residues. Disordered regions lie at residues 1134–1158 (PHEL…QSSI) and 1196–1218 (QRRP…TRPV). Position 1149 is an omega-N-methylarginine (Arg1149). Residues 1196-1217 (QRRPLSARSYSTESYGASQTRP) show a composition bias toward polar residues. Position 1233 is a phosphoserine (Ser1233). 2 disordered regions span residues 1238–1265 (GNYG…SCGK) and 1282–1312 (RLDR…PYPL). The segment covering 1243–1263 (KTSDNSDIKTRPTPVKGEESC) has biased composition (basic and acidic residues). The segment covering 1286-1307 (TPSQQSNILDNGQEDVSPSGQW) has biased composition (polar residues). 2 positions are modified to phosphoserine: Ser1288 and Ser1392. Residues 1398-1488 (EQFCVRIEKN…TVDLVIQREL (91 aa)) form the PDZ domain.

It belongs to the LAP (LRR and PDZ) protein family. As to quaternary structure, interacts with CNKSR2 and DLG4. Interacts with CTNND2/Catenin delta-2. Forms a complex with N-cadherin through CTNND2. Interacts with CAMK2A. In terms of tissue distribution, expressed in brain (at protein level).

It is found in the cytoplasm. The protein resides in the postsynaptic density. Its function is as follows. Required for normal synaptic spine architecture and function. Necessary for DISC1 and GRM5 localization to postsynaptic density complexes and for both N-methyl D-aspartate receptor-dependent and metabotropic glutamate receptor-dependent long term depression. The sequence is that of Leucine-rich repeat-containing protein 7 (Lrrc7) from Mus musculus (Mouse).